Consider the following 343-residue polypeptide: Mas-related G-protein coupled receptor member F (343 aa).

Topologically, residues 1-44 (MAGNCSWEAHSTNQNKMCPGMSEALELYSRGFLTIEQIATLPPP) are extracellular. N-linked (GlcNAc...) asparagine glycosylation occurs at Asn4. The helical transmembrane segment at 45-66 (AVTNYIFLLLCLCGLVGNGLVL) threads the bilayer. Topologically, residues 67–82 (WFFGFSIKRTPFSIYF) are cytoplasmic. A helical membrane pass occupies residues 83 to 104 (LHLASADGIYLFSKAVIALLNM). The Extracellular segment spans residues 105 to 123 (GTFLGSFPDYVRRVSRIVG). Residues 124-144 (LCTFFAGVSLLPAISIERCVS) traverse the membrane as a helical segment. Over 145–160 (VIFPMWYWRRRPKRLS) the chain is Cytoplasmic. The helical transmembrane segment at 161–181 (AGVCALLWLLSFLVTSIHNYF) threads the bilayer. The Extracellular segment spans residues 182–198 (CMFLGHEASGTACLNMD). Residues 199-220 (ISLGILLFFLFCPLMVLPCLAL) traverse the membrane as a helical segment. The Cytoplasmic portion of the chain corresponds to 221–241 (ILHVECRARRRQRSAKLNHVV). A helical membrane pass occupies residues 242–263 (LAIVSVFLVSSIYLGIDWFLFW). At 264–273 (VFQIPAPFPE) the chain is on the extracellular side. Residues 274–294 (YVTDLCICINSSAKPIVYFLA) traverse the membrane as a helical segment. At 295–343 (GRDKSQRLWEPLRVVFQRALRDGAEPGDAASSTPNTVTMEMQCPSGNAS) the chain is on the cytoplasmic side. Residues 318–343 (AEPGDAASSTPNTVTMEMQCPSGNAS) form a disordered region. The segment covering 324–343 (ASSTPNTVTMEMQCPSGNAS) has biased composition (polar residues).

This sequence belongs to the G-protein coupled receptor 1 family. Mas subfamily. As to expression, gut, vas deferens, uterus and aorta; barely detectable in liver, kidney, lung, and salivary gland. In the brain, markedly abundant in the cerebellum.

It is found in the cell membrane. Functionally, orphan receptor. May bind to a neuropeptide and may regulate nociceptor function and/or development, including the sensation or modulation of pain. In Rattus norvegicus (Rat), this protein is Mas-related G-protein coupled receptor member F (Mrgprf).